Here is a 292-residue protein sequence, read N- to C-terminus: Aspartate carbamoyltransferase catalytic subunit (292 aa).

Arg50 and Thr51 together coordinate carbamoyl phosphate. Residue Lys78 participates in L-aspartate binding. Positions 100, 128, and 131 each coordinate carbamoyl phosphate. L-aspartate contacts are provided by Arg161 and Arg211. Residues Gly250 and Pro251 each coordinate carbamoyl phosphate.

Belongs to the aspartate/ornithine carbamoyltransferase superfamily. ATCase family. In terms of assembly, heterododecamer (2C3:3R2) of six catalytic PyrB chains organized as two trimers (C3), and six regulatory PyrI chains organized as three dimers (R2).

The catalysed reaction is carbamoyl phosphate + L-aspartate = N-carbamoyl-L-aspartate + phosphate + H(+). It functions in the pathway pyrimidine metabolism; UMP biosynthesis via de novo pathway; (S)-dihydroorotate from bicarbonate: step 2/3. In terms of biological role, catalyzes the condensation of carbamoyl phosphate and aspartate to form carbamoyl aspartate and inorganic phosphate, the committed step in the de novo pyrimidine nucleotide biosynthesis pathway. This Nitratiruptor sp. (strain SB155-2) protein is Aspartate carbamoyltransferase catalytic subunit.